Reading from the N-terminus, the 334-residue chain is Tryptophan--tRNA ligase (334 aa).

ATP is bound by residues 11–13 (QPS) and 19–20 (GN). Positions 12-20 (PSGELTIGN) match the 'HIGH' region motif. Asp135 provides a ligand contact to L-tryptophan. ATP-binding positions include 147-149 (GED), Val186, and 195-199 (KMSKS). Residues 195-199 (KMSKS) carry the 'KMSKS' region motif.

The protein belongs to the class-I aminoacyl-tRNA synthetase family. As to quaternary structure, homodimer.

Its subcellular location is the cytoplasm. The catalysed reaction is tRNA(Trp) + L-tryptophan + ATP = L-tryptophyl-tRNA(Trp) + AMP + diphosphate + H(+). Functionally, catalyzes the attachment of tryptophan to tRNA(Trp). The protein is Tryptophan--tRNA ligase of Shigella flexneri.